Consider the following 151-residue polypeptide: Aspartate carbamoyltransferase regulatory chain (151 aa).

4 residues coordinate Zn(2+): Cys107, Cys112, Cys135, and Cys138.

It belongs to the PyrI family. Contains catalytic and regulatory chains. It depends on Zn(2+) as a cofactor.

In terms of biological role, involved in allosteric regulation of aspartate carbamoyltransferase. This chain is Aspartate carbamoyltransferase regulatory chain, found in Thermococcus gammatolerans (strain DSM 15229 / JCM 11827 / EJ3).